A 267-amino-acid chain; its full sequence is Deoxyribose-phosphate aldolase (267 aa).

Asp-123 (proton donor/acceptor) is an active-site residue. Lys-185 functions as the Schiff-base intermediate with acetaldehyde in the catalytic mechanism. Lys-217 serves as the catalytic Proton donor/acceptor.

The protein belongs to the DeoC/FbaB aldolase family. DeoC type 1 subfamily.

The protein resides in the cytoplasm. The catalysed reaction is 2-deoxy-D-ribose 5-phosphate = D-glyceraldehyde 3-phosphate + acetaldehyde. It functions in the pathway carbohydrate degradation; 2-deoxy-D-ribose 1-phosphate degradation; D-glyceraldehyde 3-phosphate and acetaldehyde from 2-deoxy-alpha-D-ribose 1-phosphate: step 2/2. In terms of biological role, catalyzes a reversible aldol reaction between acetaldehyde and D-glyceraldehyde 3-phosphate to generate 2-deoxy-D-ribose 5-phosphate. This Coccidioides immitis (strain RS) (Valley fever fungus) protein is Deoxyribose-phosphate aldolase.